A 175-amino-acid chain; its full sequence is ATP-dependent protease subunit HslV (175 aa).

The active site involves Thr2. Na(+) is bound by residues Ala156, Cys159, and Thr162.

This sequence belongs to the peptidase T1B family. HslV subfamily. As to quaternary structure, a double ring-shaped homohexamer of HslV is capped on each side by a ring-shaped HslU homohexamer. The assembly of the HslU/HslV complex is dependent on binding of ATP.

It is found in the cytoplasm. It catalyses the reaction ATP-dependent cleavage of peptide bonds with broad specificity.. Allosterically activated by HslU binding. Its function is as follows. Protease subunit of a proteasome-like degradation complex believed to be a general protein degrading machinery. In Rhizobium rhizogenes (strain K84 / ATCC BAA-868) (Agrobacterium radiobacter), this protein is ATP-dependent protease subunit HslV.